The sequence spans 130 residues: Large ribosomal subunit protein eL32 (130 aa).

The protein belongs to the eukaryotic ribosomal protein eL32 family.

The chain is Large ribosomal subunit protein eL32 (rpl32e) from Pyrococcus abyssi (strain GE5 / Orsay).